The primary structure comprises 291 residues: ATP synthase gamma chain (291 aa).

The protein belongs to the ATPase gamma chain family. As to quaternary structure, F-type ATPases have 2 components, CF(1) - the catalytic core - and CF(0) - the membrane proton channel. CF(1) has five subunits: alpha(3), beta(3), gamma(1), delta(1), epsilon(1). CF(0) has three main subunits: a, b and c.

The protein localises to the cell inner membrane. In terms of biological role, produces ATP from ADP in the presence of a proton gradient across the membrane. The gamma chain is believed to be important in regulating ATPase activity and the flow of protons through the CF(0) complex. This is ATP synthase gamma chain from Xanthobacter autotrophicus (strain ATCC BAA-1158 / Py2).